The chain runs to 54 residues: MNWKTILIYLLIFVAGIVIGKIRINVKMNKGSCPRDLIDKYKQQLNDSESSDYL.

Residues 6 to 26 (ILIYLLIFVAGIVIGKIRINV) form a helical membrane-spanning segment.

The protein resides in the host membrane. This is an uncharacterized protein from Acidianus convivator (ABV).